The following is a 538-amino-acid chain: Carotenoid 9,10(9',10')-cleavage dioxygenase 1 (538 aa).

Residues H222, H270, H336, and H523 each coordinate Fe cation.

It belongs to the carotenoid oxygenase family. As to quaternary structure, homodimer. It depends on Fe(2+) as a cofactor. As to expression, high expression in flowers and siliques. Also detected in stems, leaves and roots.

It is found in the cytoplasm. The catalysed reaction is all-trans-zeaxanthin + 2 O2 = 4,9-dimethyldodeca-2,4,6,8,10-pentaenedial + 2 (3R)-hydroxy-beta-ionone. Functionally, cleaves a variety of carotenoids symmetrically at both the 9-10 and 9'-10' double bonds. Active on beta,beta-carotene, lutein, zeaxanthin, all-trans-violaxanthin, 9-cis-violaxanthin and 9'-cis-neoxanthin. With most substrates, the carotenoid is symmetrically cleaved. Probably not involved in abscisic acid biosynthesis. This chain is Carotenoid 9,10(9',10')-cleavage dioxygenase 1 (CCD1), found in Arabidopsis thaliana (Mouse-ear cress).